We begin with the raw amino-acid sequence, 185 residues long: Ribosome-recycling factor (185 aa).

This sequence belongs to the RRF family.

The protein localises to the cytoplasm. Functionally, responsible for the release of ribosomes from messenger RNA at the termination of protein biosynthesis. May increase the efficiency of translation by recycling ribosomes from one round of translation to another. This Streptococcus pneumoniae (strain P1031) protein is Ribosome-recycling factor.